Consider the following 887-residue polypeptide: Alanine--tRNA ligase (887 aa).

His-564, His-568, Cys-675, and His-679 together coordinate Zn(2+). A compositionally biased stretch (gly residues) spans 851–866; the sequence is GQGGGGRPDMAQGGGP. Residues 851–871 form a disordered region; it reads GQGGGGRPDMAQGGGPDGDKA.

Belongs to the class-II aminoacyl-tRNA synthetase family. Zn(2+) is required as a cofactor.

It localises to the cytoplasm. It catalyses the reaction tRNA(Ala) + L-alanine + ATP = L-alanyl-tRNA(Ala) + AMP + diphosphate. Its function is as follows. Catalyzes the attachment of alanine to tRNA(Ala) in a two-step reaction: alanine is first activated by ATP to form Ala-AMP and then transferred to the acceptor end of tRNA(Ala). Also edits incorrectly charged Ser-tRNA(Ala) and Gly-tRNA(Ala) via its editing domain. The polypeptide is Alanine--tRNA ligase (Rhizorhabdus wittichii (strain DSM 6014 / CCUG 31198 / JCM 15750 / NBRC 105917 / EY 4224 / RW1) (Sphingomonas wittichii)).